Consider the following 82-residue polypeptide: Small ribosomal subunit protein bS16 (82 aa).

Belongs to the bacterial ribosomal protein bS16 family.

This is Small ribosomal subunit protein bS16 from Acidobacterium capsulatum (strain ATCC 51196 / DSM 11244 / BCRC 80197 / JCM 7670 / NBRC 15755 / NCIMB 13165 / 161).